A 236-amino-acid chain; its full sequence is 2,3,4,5-tetrahydropyridine-2,6-dicarboxylate N-acetyltransferase (236 aa).

The protein belongs to the transferase hexapeptide repeat family. DapH subfamily.

The catalysed reaction is (S)-2,3,4,5-tetrahydrodipicolinate + acetyl-CoA + H2O = L-2-acetamido-6-oxoheptanedioate + CoA. Its pathway is amino-acid biosynthesis; L-lysine biosynthesis via DAP pathway; LL-2,6-diaminopimelate from (S)-tetrahydrodipicolinate (acetylase route): step 1/3. In terms of biological role, catalyzes the transfer of an acetyl group from acetyl-CoA to tetrahydrodipicolinate. In Lactobacillus acidophilus (strain ATCC 700396 / NCK56 / N2 / NCFM), this protein is 2,3,4,5-tetrahydropyridine-2,6-dicarboxylate N-acetyltransferase.